Here is a 147-residue protein sequence, read N- to C-terminus: Hemoglobin subunit beta (147 aa).

An N-acetylvaline modification is found at Val2. In terms of domain architecture, Globin spans 3–147 (HLSAEEKGLV…VATALAHKYH (145 aa)). Thr13 carries the phosphothreonine modification. Ser45 is subject to Phosphoserine. Lys60 is modified (N6-acetyllysine). Residue His64 coordinates heme b. Residue Lys83 is modified to N6-acetyllysine. His93 contributes to the heme b binding site. The residue at position 94 (Cys94) is an S-nitrosocysteine. The residue at position 145 (Lys145) is an N6-acetyllysine.

The protein belongs to the globin family. In terms of assembly, heterotetramer of two alpha chains and two beta chains. Red blood cells.

Functionally, involved in oxygen transport from the lung to the various peripheral tissues. This is Hemoglobin subunit beta (HBB) from Scapanus orarius (Coast mole).